The chain runs to 281 residues: NAC domain-containing protein 6 (281 aa).

Positions 4–156 (LPVGSRFCPT…QDALTGFADQ (153 aa)) constitute an NAC domain. Disordered regions lie at residues 84 to 109 (GGSEGGTWRSNDGKKEIKDGHMQKGD) and 211 to 249 (LEGHEDREQPEEAELTVTQQQQQQQQQQQRQEDCDVTQE). The segment covering 94-109 (NDGKKEIKDGHMQKGD) has biased composition (basic and acidic residues). The DNA-binding element occupies 109-162 (DGLRASDDLQKVVLCRIRYKKEANVNEFGLVNHQAHQTQDALTGFADQLEMMLE). A compositionally biased stretch (low complexity) spans 229–239 (QQQQQQQQQQQ).

The protein localises to the nucleus. The protein is NAC domain-containing protein 6 (NAC006) of Arabidopsis thaliana (Mouse-ear cress).